A 295-amino-acid polypeptide reads, in one-letter code: 4-hydroxybenzoate octaprenyltransferase (295 aa).

8 helical membrane-spanning segments follow: residues 28–48 (AGWL…AGGF), 51–71 (WHLL…GCCV), 101–121 (ALGV…TTNA), 124–144 (IAWS…KRFV), 159–179 (IPMA…WLVL), 220–240 (VMAF…PFGL), 242–262 (WPLH…WRLI), and 274–294 (FTGN…GFAL).

It belongs to the UbiA prenyltransferase family. Mg(2+) is required as a cofactor.

It localises to the cell inner membrane. The catalysed reaction is all-trans-octaprenyl diphosphate + 4-hydroxybenzoate = 4-hydroxy-3-(all-trans-octaprenyl)benzoate + diphosphate. Its pathway is cofactor biosynthesis; ubiquinone biosynthesis. Functionally, catalyzes the prenylation of para-hydroxybenzoate (PHB) with an all-trans polyprenyl group. Mediates the second step in the final reaction sequence of ubiquinone-8 (UQ-8) biosynthesis, which is the condensation of the polyisoprenoid side chain with PHB, generating the first membrane-bound Q intermediate 3-octaprenyl-4-hydroxybenzoate. The sequence is that of 4-hydroxybenzoate octaprenyltransferase from Paracidovorax citrulli (strain AAC00-1) (Acidovorax citrulli).